A 58-amino-acid chain; its full sequence is Ribosome modulation factor (58 aa).

Belongs to the ribosome modulation factor family.

It is found in the cytoplasm. Functionally, during stationary phase, converts 70S ribosomes to an inactive dimeric form (100S ribosomes). This is Ribosome modulation factor from Tolumonas auensis (strain DSM 9187 / NBRC 110442 / TA 4).